Here is a 309-residue protein sequence, read N- to C-terminus: Transaldolase (309 aa).

Residue Lys125 is the Schiff-base intermediate with substrate of the active site.

The protein belongs to the transaldolase family. Type 1 subfamily. As to quaternary structure, homodimer.

It is found in the cytoplasm. It catalyses the reaction D-sedoheptulose 7-phosphate + D-glyceraldehyde 3-phosphate = D-erythrose 4-phosphate + beta-D-fructose 6-phosphate. The protein operates within carbohydrate degradation; pentose phosphate pathway; D-glyceraldehyde 3-phosphate and beta-D-fructose 6-phosphate from D-ribose 5-phosphate and D-xylulose 5-phosphate (non-oxidative stage): step 2/3. In terms of biological role, transaldolase is important for the balance of metabolites in the pentose-phosphate pathway. The sequence is that of Transaldolase from Pseudomonas syringae pv. tomato (strain ATCC BAA-871 / DC3000).